Reading from the N-terminus, the 709-residue chain is Cell adhesion molecule CEACAM3 (709 aa).

The N-terminal stretch at 1 to 34 (MELSSVLPCKRCTPWRGLLLTASLLTCWLLPTTA) is a signal peptide. Ig-like V-type domains follow at residues 35-142 (QVSI…HVYF), 155-262 (QLSI…QVDT), 275-382 (QLTV…QVNT), 393-500 (LLTI…SVHT), and 509-616 (QLVI…HIYK). Asparagine 73, asparagine 86, asparagine 103, asparagine 110, asparagine 133, asparagine 207, asparagine 224, asparagine 231, asparagine 327, asparagine 344, asparagine 351, asparagine 381, asparagine 462, asparagine 561, asparagine 578, and asparagine 585 each carry an N-linked (GlcNAc...) asparagine glycan. Positions 631–695 (RVKSSVVLTC…YRCEVSNPVS (65 aa)) constitute an Ig-like C2-type domain.

This sequence belongs to the immunoglobulin superfamily. CEA family. As to expression, expression detected only in placenta.

Functionally, possibly involved in cell adhesion. The sequence is that of Cell adhesion molecule CEACAM3 from Rattus norvegicus (Rat).